The primary structure comprises 184 residues: Inorganic pyrophosphatase (184 aa).

Substrate is bound by residues K19, R33, and Y45. Residues D55, D60, and D92 each contribute to the Mg(2+) site. Substrate is bound at residue Y129.

The protein belongs to the PPase family. Homohexamer. It depends on Mg(2+) as a cofactor.

The protein localises to the cytoplasm. The enzyme catalyses diphosphate + H2O = 2 phosphate + H(+). In terms of biological role, catalyzes the hydrolysis of inorganic pyrophosphate (PPi) forming two phosphate ions. This Mycoplasma genitalium (strain ATCC 33530 / DSM 19775 / NCTC 10195 / G37) (Mycoplasmoides genitalium) protein is Inorganic pyrophosphatase.